The chain runs to 266 residues: 3-methyl-2-oxobutanoate hydroxymethyltransferase 2 (266 aa).

Mg(2+) is bound by residues Asp45 and Asp84. Residues 45 to 46, Asp84, and Lys112 contribute to the 3-methyl-2-oxobutanoate site; that span reads DS. Glu114 is a Mg(2+) binding site. Residue Glu181 is the Proton acceptor of the active site.

It belongs to the PanB family. Homodecamer; pentamer of dimers. Mg(2+) serves as cofactor.

It localises to the cytoplasm. The enzyme catalyses 3-methyl-2-oxobutanoate + (6R)-5,10-methylene-5,6,7,8-tetrahydrofolate + H2O = 2-dehydropantoate + (6S)-5,6,7,8-tetrahydrofolate. Its pathway is cofactor biosynthesis; (R)-pantothenate biosynthesis; (R)-pantoate from 3-methyl-2-oxobutanoate: step 1/2. Its function is as follows. Catalyzes the reversible reaction in which hydroxymethyl group from 5,10-methylenetetrahydrofolate is transferred onto alpha-ketoisovalerate to form ketopantoate. The polypeptide is 3-methyl-2-oxobutanoate hydroxymethyltransferase 2 (Pseudomonas entomophila (strain L48)).